Consider the following 366-residue polypeptide: MKAAYYIGIMSGTSLDGIDAVLADFEAPRPVLLDNFYLPYPEKLREQLKALHFPAHGELHRAATLGNQLARHYAEAVGGLLRKSGVAPPEVAAIGCHGQTIRHCPQAEAGYTIQLCNSPLLVELTGIRVVSDFRSRDIAAGGQGAPLVPAFHQALFADPHVHRVIVNIGGISNLTDLPRNGSVTGFDCGPGNAMMDEWCARHTGQAYDEEGRWAATGKTLSVLLEKLLALPFFSLPPPKSVSRELFSTTWLEGYLKGDESPADVQATLLELTVAGIARCILGYCGDATEIYVCGGGARNSYLIASLQEALSGRKVGLTDSLGVDADWLEAFAFAWLARQLIQGIPGNIPSVTGAKGPRLLGAIYPA.

Residue 12 to 19 (GTSLDGID) coordinates ATP.

This sequence belongs to the anhydro-N-acetylmuramic acid kinase family.

It catalyses the reaction 1,6-anhydro-N-acetyl-beta-muramate + ATP + H2O = N-acetyl-D-muramate 6-phosphate + ADP + H(+). It participates in amino-sugar metabolism; 1,6-anhydro-N-acetylmuramate degradation. Its pathway is cell wall biogenesis; peptidoglycan recycling. Its function is as follows. Catalyzes the specific phosphorylation of 1,6-anhydro-N-acetylmuramic acid (anhMurNAc) with the simultaneous cleavage of the 1,6-anhydro ring, generating MurNAc-6-P. Is required for the utilization of anhMurNAc either imported from the medium or derived from its own cell wall murein, and thus plays a role in cell wall recycling. This Nitrosospira multiformis (strain ATCC 25196 / NCIMB 11849 / C 71) protein is Anhydro-N-acetylmuramic acid kinase.